We begin with the raw amino-acid sequence, 305 residues long: Auxin-responsive protein IAA27 (305 aa).

The EAR-like (transcriptional repression) signature appears at Leu45 to Leu49. Disordered stretches follow at residues Thr96 to Thr119 and Lys155 to Gly180. A compositionally biased stretch (polar residues) spans Lys155–Ser170. The region spanning Cys185–Ser287 is the PB1 domain.

This sequence belongs to the Aux/IAA family. Homodimers and heterodimers. Interacts with phytochrome A. Interacts with TPL.

Its subcellular location is the nucleus. Functionally, aux/IAA proteins are short-lived transcriptional factors that function as repressors of early auxin response genes at low auxin concentrations. Repression is thought to result from the interaction with auxin response factors (ARFs), proteins that bind to the auxin-responsive promoter element (AuxRE). Formation of heterodimers with ARF proteins may alter their ability to modulate early auxin response genes expression. This is Auxin-responsive protein IAA27 (IAA27) from Arabidopsis thaliana (Mouse-ear cress).